The primary structure comprises 600 residues: Lamin-B2 (600 aa).

The segment at 2-27 is head; it reads SGTPIRGTPGGTPLSPTRISRLQEKE. Serine 16 is subject to Phosphoserine; by CDK1. One can recognise an IF rod domain in the interval 25 to 381; the sequence is EKEELRQLND…KLLEGEEERL (357 aa). The coil 1A stretch occupies residues 28 to 64; it reads ELRQLNDRLAVYIDRVRALELENDRLLVKISEKEEVT. Residues 75–212 are coil 1B; sequence YESELADARR…NVFEEEIRET (138 aa). Positions 237 to 379 are coil 2; that stretch reads QALEDLRNQH…YRKLLEGEEE (143 aa). 2 disordered regions span residues 377–449 and 568–600; these read EEER…QMSQ and ENEEEEDEADFGEEDLFNQQGDPRTTSRGCLVM. Residues 380–600 are tail; that stretch reads RLKLSPSPSS…RTTSRGCLVM (221 aa). The segment covering 383–410 has biased composition (low complexity); sequence LSPSPSSRVTVSRATSSSSSSSTSLVRS. Serine 386 carries the post-translational modification Phosphoserine. The short motif at 414–419 is the Nuclear localization signal element; that stretch reads KRRRIE. An LTD domain is found at 445–562; the sequence is FQMSQQASAT…EEVAVRTVTK (118 aa). Over residues 569–583 the composition is skewed to acidic residues; that stretch reads NEEEEDEADFGEEDL. The span at 584–600 shows a compositional bias: polar residues; it reads FNQQGDPRTTSRGCLVM. A Cysteine methyl ester modification is found at cysteine 597. Cysteine 597 carries the S-farnesyl cysteine lipid modification. A propeptide spans 598 to 600 (removed in mature form); that stretch reads LVM.

It belongs to the intermediate filament family. Homodimer. Lamin dimers then assemble into dimeric head-to-tail polymers. Ultimately, two head-to-tail polymers assemble laterally into a protofilament with a uniformly shaped rod of 3.5 nm in diameter. Post-translationally, phosphorylation plays a key role in lamin organization, subcellular localization and nuclear envelope disintegration. Phosphorylation by CDK1 at Ser-16 at the onset of mitosis drives lamin disassembly and nuclear envelope breakdown.

The protein resides in the nucleus lamina. It is found in the nucleus envelope. Its subcellular location is the nucleus. The protein localises to the nucleoplasm. It localises to the nucleus matrix. Functionally, lamins are intermediate filament proteins that assemble into a filamentous meshwork, and which constitute the major components of the nuclear lamina, a fibrous layer on the nucleoplasmic side of the inner nuclear membrane. Lamins provide a framework for the nuclear envelope, bridging the nuclear envelope and chromatin. Plays an important role in nuclear assembly, chromatin organization, nuclear membrane and telomere dynamics. The sequence is that of Lamin-B2 (LMNB2) from Gallus gallus (Chicken).